Consider the following 632-residue polypeptide: PTS system mannitol-specific EIICBA component (632 aa).

The PTS EIIC type-2 domain occupies 12-341 (FGRFLSNMIM…ILLKYDFNTI (330 aa)). 6 helical membrane-spanning segments follow: residues 24-45 (ISIF…WQPN), 50-70 (QLIS…TGGS), 134-155 (SLAI…PFIE), 165-185 (IQII…EPAK), 273-292 (LILG…GGLI), and 313-334 (FSNI…SILL). The region spanning 374-469 (KTIIVACDAG…KLVENMVFLY (96 aa)) is the PTS EIIB type-2 domain. Cys-380 serves as the catalytic Phosphocysteine intermediate; for EIIB activity. Position 380 is a phosphocysteine; by EIIA (Cys-380). A PTS EIIA type-2 domain is found at 488 to 630 (FQLNEENIIL…KEALSLLTME (143 aa)). The active-site Tele-phosphohistidine intermediate; for EIIA activity is the His-548. His-548 is subject to Phosphohistidine; by HPr.

As to quaternary structure, homodimer. An intramolecular phosphotransfer takes places between His-548 and Cys-380.

The protein resides in the cell inner membrane. The enzyme catalyses D-mannitol(out) + N(pros)-phospho-L-histidyl-[protein] = D-mannitol 1-phosphate(in) + L-histidyl-[protein]. In terms of biological role, the phosphoenolpyruvate-dependent sugar phosphotransferase system (sugar PTS), a major carbohydrate active transport system, catalyzes the phosphorylation of incoming sugar substrates concomitantly with their translocation across the cell membrane. This system is involved in D-mannitol transport. In Buchnera aphidicola subsp. Acyrthosiphon pisum (strain APS) (Acyrthosiphon pisum symbiotic bacterium), this protein is PTS system mannitol-specific EIICBA component (mtlA).